The primary structure comprises 730 residues: Sodium-dependent neutral amino acid transporter B(0)AT2 (730 aa).

Residues M1–L24 form a disordered region. The Extracellular portion of the chain corresponds to M1–Y70. 2 positions are modified to phosphoserine: S25 and S55. 3 consecutive transmembrane segments (helical) span residues I71–C91, G97–L117, and V149–F169. Residues S170–G223 are Cytoplasmic-facing. 2 helical membrane passes run L224–I244 and I253–L273. The N-linked (GlcNAc...) asparagine glycan is linked to N276. 2 helical membrane passes run A302–S322 and V335–V355. Topologically, residues L356 to F458 are cytoplasmic. 5 consecutive transmembrane segments (helical) span residues W459–I479, K494–Q514, T530–I550, Y575–S595, and L619–V639. Residues R640–L730 are Extracellular-facing. A phosphoserine mark is found at S687, S699, and S701.

It belongs to the sodium:neurotransmitter symporter (SNF) (TC 2.A.22) family. SLC6A15 subfamily.

It is found in the membrane. It carries out the reaction L-leucine(in) + Na(+)(in) = L-leucine(out) + Na(+)(out). The enzyme catalyses L-isoleucine(in) + Na(+)(in) = L-isoleucine(out) + Na(+)(out). The catalysed reaction is L-methionine(in) + Na(+)(in) = L-methionine(out) + Na(+)(out). It catalyses the reaction L-proline(in) + Na(+)(in) = L-proline(out) + Na(+)(out). It carries out the reaction L-alanine(in) + Na(+)(in) = L-alanine(out) + Na(+)(out). The enzyme catalyses L-asparagine(in) + Na(+)(in) = L-asparagine(out) + Na(+)(out). The catalysed reaction is L-valine(in) + Na(+)(in) = L-valine(out) + Na(+)(out). It catalyses the reaction L-cysteine(in) + Na(+)(in) = L-cysteine(out) + Na(+)(out). It carries out the reaction L-glutamine(in) + Na(+)(in) = L-glutamine(out) + Na(+)(out). The enzyme catalyses L-serine(in) + Na(+)(in) = L-serine(out) + Na(+)(out). The catalysed reaction is L-threonine(in) + Na(+)(in) = L-threonine(out) + Na(+)(out). It catalyses the reaction L-pipecolate(in) + Na(+)(in) = L-pipecolate(out) + Na(+)(out). It carries out the reaction L-phenylalanine(in) + Na(+)(in) = L-phenylalanine(out) + Na(+)(out). Its function is as follows. Functions as a sodium-dependent neutral amino acid transporter. Exhibits preference for the branched-chain amino acids, particularly leucine, valine and isoleucine and methionine. Can also transport low-affinity substrates such as alanine, phenylalanine, glutamine and pipecolic acid. Mediates the saturable, pH-sensitive and electrogenic cotransport of proline and sodium ions with a stoichiometry of 1:1. May have a role as transporter for neurotransmitter precursors into neurons. In contrast to other members of the neurotransmitter transporter family, does not appear to be chloride-dependent. The protein is Sodium-dependent neutral amino acid transporter B(0)AT2 (SLC6A15) of Pongo abelii (Sumatran orangutan).